Reading from the N-terminus, the 709-residue chain is MGINLLPIEMDEIRKRLGREPNETEWRVIDAVWSEHCSYKSSKIFLKSFSIDSPNVIMGIKDWQDAGAVDIGDGWAVVIKVESHNHPSAIDPFNGAATGVGGIIRDIISKGAKPIALMDMIRVGNLKIKKNVWLLKNIIAGIAAYGNSIGVPVVGGELSFDDTYNDNPLVDVAAIGIVRKDKIKPSIVDKAGLKLVLAGLTGVDGLGGASFASRKLSGEDEIGAVQIADPFAGKIILDVTLEIADKVEAIKDLGGGGLAVAVTEITNGLGATVDIEKIPLRVKNMNPSDVIISETQERMLYAVEEKNVKEVCEAFEEYEYPCSVIGEITNEPVIKFRYIGKDLVSLPTNVLLNPPRFLWPIKNTKKNVEEKIVDLPLESAIYTVLTHPDLVSKGWAYSQFDYEVNTSTVVKPGDADSAVVSLPNGKLLAIKADANPDMCAEDGYECGKGIVAEAYRNLATVGARGMVAVDHLQFGDPKKAEVYYTFVEAIRGIGEATRFFNIPIVGGKVSFYNENNQGRPIKPTPLIVMAGLVQDKLLKNRVEDNLYVVSVGYTRKELGGSLLSKIFKIPSQAPKVRLQEDLLSSEVVIDSINEGKITFAKDVSRGGLAASLFSILVHGYGVEISTKSILSDTDNVIENLFSESSGRFIVLTNEPEWIVEKSKSKGIVASIIGRVNKKTNILTIDNIDYNLKNIVDNYFNFLEEVMGNG.

Residue His36 is part of the active site. 2 residues coordinate ATP: Tyr39 and Lys80. Glu82 lines the Mg(2+) pocket. Residues 83–86 (SHNH) and Arg105 contribute to the substrate site. The Proton acceptor role is filled by His84. Asp106 lines the Mg(2+) pocket. Residue Gln226 coordinates substrate. Asp252 lines the Mg(2+) pocket. Position 294–296 (294–296 (ETQ)) interacts with substrate. 2 residues coordinate ATP: Asp470 and Gly507. Ser510 serves as a coordination point for substrate.

Belongs to the FGAMS family. In terms of assembly, monomer. Part of the FGAM synthase complex composed of 1 PurL, 1 PurQ and 2 PurS subunits.

It is found in the cytoplasm. The enzyme catalyses N(2)-formyl-N(1)-(5-phospho-beta-D-ribosyl)glycinamide + L-glutamine + ATP + H2O = 2-formamido-N(1)-(5-O-phospho-beta-D-ribosyl)acetamidine + L-glutamate + ADP + phosphate + H(+). The protein operates within purine metabolism; IMP biosynthesis via de novo pathway; 5-amino-1-(5-phospho-D-ribosyl)imidazole from N(2)-formyl-N(1)-(5-phospho-D-ribosyl)glycinamide: step 1/2. Functionally, part of the phosphoribosylformylglycinamidine synthase complex involved in the purines biosynthetic pathway. Catalyzes the ATP-dependent conversion of formylglycinamide ribonucleotide (FGAR) and glutamine to yield formylglycinamidine ribonucleotide (FGAM) and glutamate. The FGAM synthase complex is composed of three subunits. PurQ produces an ammonia molecule by converting glutamine to glutamate. PurL transfers the ammonia molecule to FGAR to form FGAM in an ATP-dependent manner. PurS interacts with PurQ and PurL and is thought to assist in the transfer of the ammonia molecule from PurQ to PurL. This Saccharolobus solfataricus (strain ATCC 35092 / DSM 1617 / JCM 11322 / P2) (Sulfolobus solfataricus) protein is Phosphoribosylformylglycinamidine synthase subunit PurL.